Here is a 620-residue protein sequence, read N- to C-terminus: uncharacterized protein (620 aa).

4 consecutive transmembrane segments (helical) span residues 66–86 (LLNF…NQII), 238–258 (FFDA…NLLW), 546–566 (LGII…VWTI), and 584–604 (IIFI…ILVF).

Its subcellular location is the cell membrane. This is an uncharacterized protein from Mycoplasma genitalium (strain ATCC 33530 / DSM 19775 / NCTC 10195 / G37) (Mycoplasmoides genitalium).